Consider the following 377-residue polypeptide: Short chain dehydrogenase gsfE (377 aa).

Residues Asp-89, Gln-121, Tyr-226, Ala-266, and Ser-268 each contribute to the NADP(+) site. The Proton donor role is filled by Tyr-226.

It belongs to the short-chain dehydrogenases/reductases (SDR) family. Highly divergent.

It carries out the reaction dehydrogriseofulvin + NADPH + H(+) = griseofulvin + NADP(+). Its pathway is secondary metabolite biosynthesis; terpenoid biosynthesis. Short chain dehydrogenase; part of the gene cluster that mediates the biosynthesis of griseofulvin, an important antifungal drug that has been in use for a long time for treating dermatophyte infections. The first step of the pathway is the formation of the heptaketide backbone by gsfA which is initiated by priming with acetyl-CoA, followed by sequential condensations of 6 malonyl-CoA units. The resulting benzophenone can undergo a spontaneous dehydration to form norlichexanthone. However, the true precursor for the griseofulvin biosynthesis is not norlichexanthone, but the heptaketide benzophenone that is O-methylated at 3-OH by gsfB to produce griseophenone D which is further methylated at 9-OH by gsfC to yield griseophenone C. Griseophenone C is then substrate of halogenase gsfI which is responsible for the regio-specific chlorination at the C13 position to form griseophenone B. The cytochrome P450 gsfF catalyzes the coupling of orcinol and phloroglucinol rings in griseophenone B to form desmethyl-dehydrogriseofulvin A which is further methylated at 5-OH by gsfD to yield dehydrogriseofulvin. Finally, gsfE performs stereospecific reduction of enone 18 of dehydrogriseofulvin to afford the final product griseofulvin. The protein is Short chain dehydrogenase gsfE of Penicillium aethiopicum.